Here is a 1152-residue protein sequence, read N- to C-terminus: Calcium-activated potassium channel subunit alpha-1 (1152 aa).

Positions 1–37 are disordered; that stretch reads MSSNIHANHLSLDASSSSSSSSSSSSSSSSSSSSVHE. Over 1-60 the chain is Extracellular; it reads MSSNIHANHLSLDASSSSSSSSSSSSSSSSSSSSVHEPKMDALIIPVTMEVPCDSRGQRM. Positions 15 to 34 are enriched in low complexity; it reads SSSSSSSSSSSSSSSSSSSS. A helical membrane pass occupies residues 61–81; the sequence is WWAFLASSMVTFFGGLFIILL. The Cytoplasmic portion of the chain corresponds to 82 to 152; sequence WRTLKYLWTV…MISAQTLTGR (71 aa). 3 S-palmitoyl cysteine lipidation sites follow: Cys-92, Cys-93, and Cys-95. A helical membrane pass occupies residues 153-173; the sequence is VLVVLVFALSIGALVIYFIDS. Residues 174–188 lie on the Extracellular side of the membrane; the sequence is SNPIESCQNFYKDFT. A helical transmembrane segment spans residues 189–209; the sequence is LQIDMAFNVFFLLYFGLRFIA. The Cytoplasmic segment spans residues 210–213; the sequence is ANDK. The helical transmembrane segment at 214-234 threads the bilayer; that stretch reads LWFWLEVNSVVDFFTVPPVFV. Residues 235–238 lie on the Extracellular side of the membrane; the sequence is SVYL. The helical; Voltage-sensor transmembrane segment at 239–259 threads the bilayer; sequence NRSWLGLRFLRALRLIQFSEI. Residues 260 to 274 lie on the Cytoplasmic side of the membrane; it reads LQFLNILKTSNSIKL. A helical transmembrane segment spans residues 275-295; the sequence is VNLLSIFISTWLTAAGFIHLV. Residues 296-309 are Extracellular-facing; the sequence is ENSGDPWENFQNNQ. The pore-forming intramembrane region spans 310-332; it reads ALTYWECVYLLMVTMSTVGYGDV. A Selectivity for potassium motif is present at residues 326–329; it reads TVGY. The Extracellular segment spans residues 333 to 341; that stretch reads YAKTTLGRL. A helical membrane pass occupies residues 342–362; that stretch reads FMVFFILGGLAMFASYVPEII. Residues 363-1152 lie on the Cytoplasmic side of the membrane; that stretch reads ELIGNRKKYG…KQKYVQEERL (790 aa). The 143-residue stretch at 381–523 folds into the RCK N-terminal 1 domain; that stretch reads RKHIVVCGHI…WNWKEGDDAI (143 aa). Mg(2+) is bound by residues Glu-413, Gln-436, and Glu-438. Positions 530-550 are segment S7; the sequence is LGFIAQSCLAQGLSTMLANLF. The interval 587–607 is segment S8; the sequence is LSFPTVCELCFVKLKLLMIAI. The tract at residues 651-655 is heme-binding motif; that stretch reads CKACH. The disordered stretch occupies residues 675 to 703; the sequence is EQPSTLSPKKKQRNGGMRNSPSSSPKLMR. Thr-679 carries the phosphothreonine modification. Phosphoserine occurs at positions 681, 694, and 698. Residues 753 to 773 are segment S9; sequence VLSGHVVVCIFGDVSSALIGL. The region spanning 755–899 is the RCK N-terminal 2 domain; the sequence is SGHVVVCIFG…MDRSSPDNSP (145 aa). Thr-886 is subject to Phosphothreonine. A phosphoserine mark is found at Ser-894 and Ser-898. A Calcium bowl motif is present at residues 919–941; it reads TELVNDTNVQFLDQDDDDDPDTE. Residues Gln-928, Asp-931, Asp-934, and Asp-936 each coordinate Ca(2+). Residues 948–968 form a segment S10 region; that stretch reads FACGTAFAVSVLDSLMSATYF. Residues 1102-1127 are compositionally biased toward low complexity; the sequence is RASLSHSSHSSQSSSKKSSSVHSIPS. The interval 1102 to 1152 is disordered; sequence RASLSHSSHSSQSSSKKSSSVHSIPSTANRQNRPKSRESRDKQKYVQEERL. The span at 1136–1152 shows a compositional bias: basic and acidic residues; that stretch reads KSRESRDKQKYVQEERL. Phosphoserine is present on residues Ser-1137 and Ser-1140.

Belongs to the potassium channel family. Calcium-activated (TC 1.A.1.3) subfamily. KCa1.1/KCNMA1 sub-subfamily. Homotetramer; which constitutes the calcium-activated potassium channel. Interacts with beta subunits KCNMB1, KCNMB2, KCNMB3 and KCNMB4. Interacts with gamma subunits LRRC26, LRRC38, LRRC52 and LRRC55. Beta and gamma subunits are accessory, and modulate its activity. Interacts with RAB11B. In terms of processing, phosphorylated. Phosphorylation by kinases such as PKA and/or PKG. In smooth muscles, phosphorylation affects its activity. Palmitoylation by ZDHHC22 and ZDHHC23 within the intracellular linker between the S0 and S1 transmembrane domains regulates localization to the plasma membrane. Depalmitoylated by LYPLA1 and LYPLAL1, leading to retard exit from the trans-Golgi network.

Its subcellular location is the cell membrane. It carries out the reaction K(+)(in) = K(+)(out). Its activity is regulated as follows. Ethanol and carbon monoxide-bound heme increase channel activation. Heme inhibits channel activation. Its function is as follows. Potassium channel activated by both membrane depolarization or increase in cytosolic Ca(2+) that mediates export of K(+). It is also activated by the concentration of cytosolic Mg(2+). Its activation dampens the excitatory events that elevate the cytosolic Ca(2+) concentration and/or depolarize the cell membrane. It therefore contributes to repolarization of the membrane potential. Plays a key role in controlling excitability in a number of systems, such as regulation of the contraction of smooth muscle, the tuning of hair cells in the cochlea, regulation of transmitter release, and innate immunity. In smooth muscles, its activation by high level of Ca(2+), caused by ryanodine receptors in the sarcoplasmic reticulum, regulates the membrane potential. In cochlea cells, its number and kinetic properties partly determine the characteristic frequency of each hair cell and thereby helps to establish a tonotopic map. Kinetics of KCNMA1 channels are determined by alternative splicing, phosphorylation status and its combination with modulating beta subunits. Highly sensitive to both iberiotoxin (IbTx) and charybdotoxin (CTX). In Sus scrofa (Pig), this protein is Calcium-activated potassium channel subunit alpha-1 (KCNMA1).